Reading from the N-terminus, the 683-residue chain is THO complex subunit 5 homolog (683 aa).

Residues 1-42 are disordered; it reads MSSESSKKRKPKVIRSDGTPTEGKRNRSDTEQEGKYYSEEAE. Position 2 is an N-acetylserine (Ser-2). Residues 2-144 are interaction with CSF1R; it reads SSESSKKRKP…YEVMHLQKEI (143 aa). The segment at 2–199 is interaction with THOC7; sequence SSESSKKRKP…RLDWELEQRK (198 aa). Phosphoserine occurs at positions 5 and 6. Positions 7–10 match the Nuclear localization signal motif; it reads KKRK. The span at 22–42 shows a compositional bias: basic and acidic residues; that stretch reads EGKRNRSDTEQEGKYYSEEAE. A coiled-coil region spans residues 81–247; sequence AIEIEERRIQ…QASLPVQEYL (167 aa). Lys-153 is covalently cross-linked (Glycyl lysine isopeptide (Lys-Gly) (interchain with G-Cter in SUMO2)). Phosphotyrosine is present on Tyr-225. The interval 247–683 is tandem RWD domains; it reads LFMPFDQAHK…NHPQGFFSHR (437 aa). Residues 301-336 form a disordered region; sequence FKPPEDSQDDESDSDAEEEQTTKRRRPTLGVQLDDK. The segment covering 306–319 has biased composition (acidic residues); it reads DSQDDESDSDAEEE. Ser-307, Ser-312, and Ser-314 each carry phosphoserine. Thr-328 carries the phosphothreonine modification.

This sequence belongs to the THOC5 family. As to quaternary structure, component of the THO subcomplex, which is composed of THOC1, THOC2, THOC3, THOC5, THOC6 and THOC7. The THO subcomplex interacts with DDX39B to form the THO-DDX39B complex which multimerizes into a 28-subunit tetrameric assembly. Component of the transcription/export (TREX) complex at least composed of ALYREF/THOC4, DDX39B, SARNP/CIP29, CHTOP and the THO subcomplex; in the complex interacts with THOC1, THOC2, THOC5, THOC6 and THOC7; forms a coiled-coil dimer with THOC7; together with THOC6 and THOC7, plays a key structural role in the oligomerization of the THO-DDX39B complex. TREX seems to have a dynamic structure involving ATP-dependent remodeling. Interacts (via N-terminus) with the NTF2 domain of NXF1. Interacts with phosphorylated CSF1R. Forms a complex with CEBPB. Interacts with CPSF6; indicative for an association with the cleavage factor Im (CFIm) complex. Interacts with THOC1. Interacts with LUZP4. Interacts with NCBP3. Phosphorylated on tyrosine upon binding to activated CSF1R; which causes a dissociation of the two proteins. Phosphorylation on Ser-5 and/or Ser-6 is required for nuclear export. Phosphorylated on Thr-328 in insulin-stimulated adipocytes. In terms of tissue distribution, ubiquitously expressed, with highest levels in testis, liver and heart.

It is found in the nucleus. Its subcellular location is the cytoplasm. Its function is as follows. Component of the THO subcomplex of the TREX complex which is thought to couple mRNA transcription, processing and nuclear export, and which specifically associates with spliced mRNA and not with unspliced pre-mRNA. Plays a key structural role in the oligomerization of the THO-DDX39B complex. TREX is recruited to spliced mRNAs by a transcription-independent mechanism, binds to mRNA upstream of the exon-junction complex (EJC) and is recruited in a splicing- and cap-dependent manner to a region near the 5' end of the mRNA where it functions in mRNA export to the cytoplasm via the TAP/NXF1 pathway. THOC5 in conjunction with ALYREF/THOC4 functions in NXF1-NXT1 mediated nuclear export of HSP70 mRNA; both proteins enhance the RNA binding activity of NXF1 and are required for NXF1 localization to the nuclear rim. Involved in transcription elongation and genome stability. Involved in alternative polyadenylation site choice by recruiting CPSF6 to 5' region of target genes; probably mediates association of the TREX and CFIm complexes. In terms of biological role, regulates the expression of myeloid transcription factors CEBPA, CEBPB and GAB2 by enhancing the levels of phosphatidylinositol 3,4,5-trisphosphate. May be involved in the differentiation of granulocytes and adipocytes. Essential for hematopoietic primitive cell survival and plays an integral role in monocytic development. This chain is THO complex subunit 5 homolog (Thoc5), found in Mus musculus (Mouse).